The following is a 954-amino-acid chain: ATPase 9, plasma membrane-type (954 aa).

Topologically, residues M1–F66 are cytoplasmic. Residues L67 to I86 form a helical membrane-spanning segment. The Extracellular portion of the chain corresponds to A87–W98. Residues Q99–E119 traverse the membrane as a helical segment. Over N120–I248 the chain is Cytoplasmic. Residues G249–P269 traverse the membrane as a helical segment. Residues I270–G278 lie on the Extracellular side of the membrane. A helical transmembrane segment spans residues I279–T296. The Cytoplasmic portion of the chain corresponds to V297–K648. D334 serves as the catalytic 4-aspartylphosphate intermediate. Residues D593 and D597 each contribute to the Mg(2+) site. Residues N649 to L670 traverse the membrane as a helical segment. Over I671–D675 the chain is Extracellular. Residues F676 to D698 form a helical membrane-spanning segment. The Cytoplasmic portion of the chain corresponds to R699 to I714. The chain crosses the membrane as a helical span at residues F715–A735. Over A736–H756 the chain is Extracellular. The helical transmembrane segment at E757–T777 threads the bilayer. Over R778–G789 the chain is Cytoplasmic. The helical transmembrane segment at F790–A810 threads the bilayer. Residues N811–R818 are Extracellular-facing. The chain crosses the membrane as a helical span at residues G819–L839. Residues D840–L954 lie on the Cytoplasmic side of the membrane. T886 carries the post-translational modification Phosphothreonine. S936 is modified (phosphoserine). The tract at residues Y952–L954 is interaction with 14-3-3 proteins. T953 bears the Phosphothreonine mark.

The protein belongs to the cation transport ATPase (P-type) (TC 3.A.3) family. Type IIIA subfamily. Binds to 14-3-3 proteins. The binding is induced by phosphorylation of Thr-953. Binding to 14-3-3 proteins activates the H(+)-ATPase. As to expression, anther specific. Expressed in guard cells.

It localises to the membrane. It catalyses the reaction ATP + H2O + H(+)(in) = ADP + phosphate + 2 H(+)(out). The plasma membrane H(+) ATPase of plants and fungi generates a proton gradient that drives the active transport of nutrients by H(+)-symport. The resulting external acidification and/or internal alkinization may mediate growth responses. This is ATPase 9, plasma membrane-type (AHA9) from Arabidopsis thaliana (Mouse-ear cress).